The following is a 229-amino-acid chain: NAD(P)H-hydrate epimerase (229 aa).

One can recognise a YjeF N-terminal domain in the interval A10–L217. N60–D64 lines the (6S)-NADPHX pocket. 2 residues coordinate K(+): N61 and D125. (6S)-NADPHX-binding positions include G129–P135 and D158. K(+) is bound at residue S161.

The protein belongs to the NnrE/AIBP family. The cofactor is K(+).

The enzyme catalyses (6R)-NADHX = (6S)-NADHX. It catalyses the reaction (6R)-NADPHX = (6S)-NADPHX. Catalyzes the epimerization of the S- and R-forms of NAD(P)HX, a damaged form of NAD(P)H that is a result of enzymatic or heat-dependent hydration. This is a prerequisite for the S-specific NAD(P)H-hydrate dehydratase to allow the repair of both epimers of NAD(P)HX. This Drosophila virilis (Fruit fly) protein is NAD(P)H-hydrate epimerase.